A 1221-amino-acid chain; its full sequence is DNA-directed RNA polymerase subunit beta (1221 aa).

The interval 1176 to 1221 (EKKKLAEEEAEIAAEAEAEGSAEEDAAEADADANEAETADDDKASK) is disordered. Residues 1183 to 1215 (EEAEIAAEAEAEGSAEEDAAEADADANEAETAD) are compositionally biased toward acidic residues.

The protein belongs to the RNA polymerase beta chain family. In terms of assembly, the RNAP catalytic core consists of 2 alpha, 1 beta, 1 beta' and 1 omega subunit. When a sigma factor is associated with the core the holoenzyme is formed, which can initiate transcription.

The enzyme catalyses RNA(n) + a ribonucleoside 5'-triphosphate = RNA(n+1) + diphosphate. Its function is as follows. DNA-dependent RNA polymerase catalyzes the transcription of DNA into RNA using the four ribonucleoside triphosphates as substrates. The sequence is that of DNA-directed RNA polymerase subunit beta from Lactobacillus delbrueckii subsp. bulgaricus (strain ATCC BAA-365 / Lb-18).